The following is a 429-amino-acid chain: Protein ABERRANT PANICLE ORGANIZATION 1 (429 aa).

A compositionally biased stretch (pro residues) spans 1-11 (MMNPRRLPPLP). The tract at residues 1-21 (MMNPRRLPPLPSSTSSASAAD) is disordered. Residues 25-71 (PRVWRRLPQPLVDRVLACLPTPSFLRLRAACRRFYHLLFSSPFLHSH) form the F-box domain. Helical transmembrane passes span 72-92 (LLLS…GHLL) and 112-132 (VAGG…LAFL). Kelch repeat units lie at residues 229–277 (MAFA…ELGG), 284–339 (RVAL…AEGG), and 350–397 (YVVL…GAAG).

In terms of assembly, part of a putative SCF (ASK/Cullin/F-box) ubiquitin ligase complex. Interacts with FL/APO2. As to expression, expressed in seedlings, roots, leaves, shoot apical meristem (SAM), developing panicles, and, at lower levels, in developing seeds.

It is found in the membrane. Its pathway is protein modification; protein ubiquitination. Component of SCF(ASK-cullin-F-box) E3 ubiquitin ligase complexes, which may mediate the ubiquitination and subsequent proteasomal degradation of target proteins. Together with FL/APO2, involved in the temporal regulation of meristem identity during both vegetative and reproductive developments in an APO2-dependent manner. Promotes spikelet formation by suppressing the precocious conversion of inflorescence meristems to spikelet meristems, probably via a positive regulation of class-C floral homeotic genes, but not of class-B genes, and through the control of cell proliferation in meristems. Mediates culm development and strength/diameter enhancement at internodes. Required for the regulation of the plastochron, floral organ identity, and floral determinacy. Controls the number of primary rachis branches (PRBs). May trigger the formation of vascular bundle systems which, consequently, promote carbohydrate translocation to panicles. Involved in ozone-induced grain yield regulation. This is Protein ABERRANT PANICLE ORGANIZATION 1 from Oryza sativa subsp. indica (Rice).